The primary structure comprises 515 residues: 1-pyrroline-5-carboxylate dehydrogenase (515 aa).

Catalysis depends on residues E286 and C320.

The protein belongs to the aldehyde dehydrogenase family. RocA subfamily.

It carries out the reaction L-glutamate 5-semialdehyde + NAD(+) + H2O = L-glutamate + NADH + 2 H(+). It functions in the pathway amino-acid degradation; L-proline degradation into L-glutamate; L-glutamate from L-proline: step 2/2. This is 1-pyrroline-5-carboxylate dehydrogenase from Geobacillus kaustophilus (strain HTA426).